A 337-amino-acid polypeptide reads, in one-letter code: Protein MICROTUBULE BINDING PROTEIN 2C (337 aa).

Residues R80–R147 are disordered. Positions P89 to G103 are enriched in basic and acidic residues. Over residues K120 to L142 the composition is skewed to polar residues. Coiled coils occupy residues T143–D194, V223–E250, and L294–N314.

The protein belongs to the microtubule binding protein 2C family. Interacts with KN-1. Binds to tobacco mosaic virus movement protein (TMV-MP) at microtubules. As to expression, constitutively expressed in leaves.

The protein resides in the cytoplasm. Its subcellular location is the cytoskeleton. Prevents homeodomain proteins (e.g. STM) association to plasmodesmata and, consequently, cell-to-cell transport. Binds to RNA. Alters KN1 RNA-binding capacity. Regulates cytoskeleton (e.g. actin) organization that determinates cell shape. Interferes with cell-to-cell transport of tobacco mosaic virus movement protein (TMV-MP) by mediating its accumulation at microtubules, thus interfering with cell-to-cell virus movement. The sequence is that of Protein MICROTUBULE BINDING PROTEIN 2C from Nicotiana tabacum (Common tobacco).